Reading from the N-terminus, the 541-residue chain is Nif-specific regulatory protein (541 aa).

The GAF domain occupies 23–158 (RLETTLNNFV…MAANLAGRAI (136 aa)). The tract at residues 170 to 191 (TFAEEQQEQQNSRDEQSQSSAR) is disordered. The 229-residue stretch at 200 to 428 (IIGESTALMT…LENCVRRTAT (229 aa)) folds into the Sigma-54 factor interaction domain. ATP-binding positions include 228–235 (GETGTGKE) and 291–300 (ANGGTLLLDE). Residues 429–498 (LARSKTITSS…SAGVASNLIE (70 aa)) form an inter-domain linker region. Positions 442 and 447 each coordinate a divalent metal cation. Residues 499-541 (RDRLISALEEAGWNQAKAARILEKTPRQVGYALRRHGVDVRKL) are C-terminal DNA-binding domain. The segment at residues 513 to 532 (QAKAARILEKTPRQVGYALR) is a DNA-binding region (H-T-H motif).

In terms of assembly, interacts with sigma-54.

Required for activation of most nif operons, which are directly involved in nitrogen fixation. The sequence is that of Nif-specific regulatory protein (nifA) from Rhizobium meliloti (strain 1021) (Ensifer meliloti).